The primary structure comprises 135 residues: Transcription antitermination protein NusB (135 aa).

Belongs to the NusB family.

Functionally, involved in transcription antitermination. Required for transcription of ribosomal RNA (rRNA) genes. Binds specifically to the boxA antiterminator sequence of the ribosomal RNA (rrn) operons. The sequence is that of Transcription antitermination protein NusB from Clostridium perfringens (strain SM101 / Type A).